Here is a 611-residue protein sequence, read N- to C-terminus: Alkyldihydroxyacetonephosphate synthase (611 aa).

One can recognise an FAD-binding PCMH-type domain in the interval 137–317; the sequence is VKNAPDLIVL…TEAVMKVHAV (181 aa). FAD is bound by residues 169 to 175, 237 to 243, 250 to 255, and 301 to 307; these read PMGGGSN, DSFEFST, TCSSGH, and EGTLGII. Residue Arg-447 participates in substrate binding. The active-site Proton donor/acceptor is Tyr-508. Residues 544 to 546 are important for enzyme activity; that stretch reads HHH. The Microbody targeting signal motif lies at 609–611; that stretch reads PKL.

The protein belongs to the FAD-binding oxidoreductase/transferase type 4 family. As to quaternary structure, homodimer. Requires FAD as cofactor.

The protein localises to the peroxisome. The enzyme catalyses a long chain fatty alcohol + a 1-acylglycerone 3-phosphate = a 1-O-alkylglycerone 3-phosphate + a long-chain fatty acid + H(+). It participates in glycerolipid metabolism; ether lipid biosynthesis. Functionally, catalyzes the exchange of an acyl for a long-chain alkyl group and the formation of the ether bond in the biosynthesis of ether phospholipids. The chain is Alkyldihydroxyacetonephosphate synthase (eapA) from Dictyostelium discoideum (Social amoeba).